The following is a 147-amino-acid chain: Holo-[acyl-carrier-protein] synthase (147 aa).

Mg(2+)-binding residues include Asp-7 and Glu-60.

This sequence belongs to the P-Pant transferase superfamily. AcpS family. The cofactor is Mg(2+).

It is found in the cytoplasm. The enzyme catalyses apo-[ACP] + CoA = holo-[ACP] + adenosine 3',5'-bisphosphate + H(+). Its function is as follows. Transfers the 4'-phosphopantetheine moiety from coenzyme A to a Ser of acyl-carrier-protein. The protein is Holo-[acyl-carrier-protein] synthase of Bifidobacterium animalis subsp. lactis (strain AD011).